Reading from the N-terminus, the 121-residue chain is Small ribosomal subunit protein uS11 (121 aa).

It belongs to the universal ribosomal protein uS11 family. As to quaternary structure, part of the 30S ribosomal subunit. Interacts with proteins S7 and S18. Binds to IF-3.

In terms of biological role, located on the platform of the 30S subunit, it bridges several disparate RNA helices of the 16S rRNA. Forms part of the Shine-Dalgarno cleft in the 70S ribosome. The sequence is that of Small ribosomal subunit protein uS11 from Mycoplasma genitalium (strain ATCC 33530 / DSM 19775 / NCTC 10195 / G37) (Mycoplasmoides genitalium).